The primary structure comprises 293 residues: Acetyl-coenzyme A carboxylase carboxyl transferase subunit beta (293 aa).

The CoA carboxyltransferase N-terminal domain occupies 29–293 (LWSKCPECGL…GSKSLELTNA (265 aa)). Zn(2+) is bound by residues cysteine 33, cysteine 36, cysteine 52, and cysteine 55. The C4-type zinc-finger motif lies at 33–55 (CPECGLVVYLKDLRLNASVCAGC).

Belongs to the AccD/PCCB family. As to quaternary structure, acetyl-CoA carboxylase is a heterohexamer composed of biotin carboxyl carrier protein (AccB), biotin carboxylase (AccC) and two subunits each of ACCase subunit alpha (AccA) and ACCase subunit beta (AccD). The cofactor is Zn(2+).

The protein resides in the cytoplasm. The enzyme catalyses N(6)-carboxybiotinyl-L-lysyl-[protein] + acetyl-CoA = N(6)-biotinyl-L-lysyl-[protein] + malonyl-CoA. The protein operates within lipid metabolism; malonyl-CoA biosynthesis; malonyl-CoA from acetyl-CoA: step 1/1. In terms of biological role, component of the acetyl coenzyme A carboxylase (ACC) complex. Biotin carboxylase (BC) catalyzes the carboxylation of biotin on its carrier protein (BCCP) and then the CO(2) group is transferred by the transcarboxylase to acetyl-CoA to form malonyl-CoA. This chain is Acetyl-coenzyme A carboxylase carboxyl transferase subunit beta, found in Synechococcus sp. (strain CC9902).